The following is a 370-amino-acid chain: Lipoyl synthase 1, chloroplastic (370 aa).

Disordered stretches follow at residues 1–25 (MMQSSLARPLPRPPIRPACGNPVCR) and 39–67 (EAAPPAPAPAARRAAGPYTGRDPEVKKPA). The transit peptide at 1-37 (MMQSSLARPLPRPPIRPACGNPVCRSRPGSVSVARCR) directs the protein to the chloroplast. Positions 95, 100, 106, 132, 136, 139, and 347 each coordinate [4Fe-4S] cluster. The Radical SAM core domain occupies 115–336 (GEGDGIATAT…KEYGESVGFR (222 aa)).

This sequence belongs to the radical SAM superfamily. Lipoyl synthase family. It depends on [4Fe-4S] cluster as a cofactor.

It is found in the plastid. The protein resides in the chloroplast. It catalyses the reaction [[Fe-S] cluster scaffold protein carrying a second [4Fe-4S](2+) cluster] + N(6)-octanoyl-L-lysyl-[protein] + 2 oxidized [2Fe-2S]-[ferredoxin] + 2 S-adenosyl-L-methionine + 4 H(+) = [[Fe-S] cluster scaffold protein] + N(6)-[(R)-dihydrolipoyl]-L-lysyl-[protein] + 4 Fe(3+) + 2 hydrogen sulfide + 2 5'-deoxyadenosine + 2 L-methionine + 2 reduced [2Fe-2S]-[ferredoxin]. It participates in protein modification; protein lipoylation via endogenous pathway; protein N(6)-(lipoyl)lysine from octanoyl-[acyl-carrier-protein]: step 2/2. Its function is as follows. Catalyzes the radical-mediated insertion of two sulfur atoms into the C-6 and C-8 positions of the octanoyl moiety bound to the lipoyl domains of lipoate-dependent enzymes, thereby converting the octanoylated domains into lipoylated derivatives. The polypeptide is Lipoyl synthase 1, chloroplastic (Oryza sativa subsp. indica (Rice)).